A 231-amino-acid chain; its full sequence is Monothiol glutaredoxin-6 (231 aa).

The signal sequence occupies residues 1 to 29 (MIPSNKRNARILSITTLLLLLVFFVAQNA). The 104-residue stretch at 116 to 219 (QKEYSLILDL…ESLQVWSDGK (104 aa)) folds into the Glutaredoxin domain. Residue C136 participates in [2Fe-2S] cluster binding.

The protein belongs to the glutaredoxin family. Monothiol subfamily.

The protein localises to the vacuole. The chain is Monothiol glutaredoxin-6 (GRX6) from Saccharomyces cerevisiae (strain ATCC 204508 / S288c) (Baker's yeast).